The sequence spans 456 residues: ACT domain-containing protein ACR5 (456 aa).

4 ACT domains span residues Val39–Ser115, Val130–Arg207, Ile271–Gly347, and Lys349–Gln432.

Expressed in stems and siliques.

Functionally, may bind amino acids. The polypeptide is ACT domain-containing protein ACR5 (Arabidopsis thaliana (Mouse-ear cress)).